We begin with the raw amino-acid sequence, 332 residues long: Terpene synthase 1 (332 aa).

The DDxx(x)D/E motif signature appears at 81–86; sequence DDGLDA. The NDxxSxxxD/E motif signature appears at 221-229; the sequence is NDLVSYEKE.

Belongs to the terpene synthase family.

It carries out the reaction (2E,6E)-farnesyl diphosphate = (2S,3R,6S,9S)-(-)-protoillud-7-ene + diphosphate. Functionally, terpene synthase that converts its substrate farnesyl diphosphate (FPP) into the sesquiterpene protoillud-7-ene. The polypeptide is Terpene synthase 1 (Acytostelium subglobosum (Slime mold)).